Here is a 341-residue protein sequence, read N- to C-terminus: Biotin synthase (341 aa).

The Radical SAM core domain occupies 40–267 (AEIQVSTLLS…RSMVRLSAGR (228 aa)). [4Fe-4S] cluster is bound by residues Cys-55, Cys-59, and Cys-62. [2Fe-2S] cluster is bound by residues Cys-99, Cys-130, Cys-190, and Arg-262.

It belongs to the radical SAM superfamily. Biotin synthase family. As to quaternary structure, homodimer. [4Fe-4S] cluster is required as a cofactor. Requires [2Fe-2S] cluster as cofactor.

It catalyses the reaction (4R,5S)-dethiobiotin + (sulfur carrier)-SH + 2 reduced [2Fe-2S]-[ferredoxin] + 2 S-adenosyl-L-methionine = (sulfur carrier)-H + biotin + 2 5'-deoxyadenosine + 2 L-methionine + 2 oxidized [2Fe-2S]-[ferredoxin]. It participates in cofactor biosynthesis; biotin biosynthesis; biotin from 7,8-diaminononanoate: step 2/2. In terms of biological role, catalyzes the conversion of dethiobiotin (DTB) to biotin by the insertion of a sulfur atom into dethiobiotin via a radical-based mechanism. The protein is Biotin synthase of Xylella fastidiosa (strain M23).